The chain runs to 131 residues: ATP synthase epsilon chain, chloroplastic (131 aa).

The protein belongs to the ATPase epsilon chain family. In terms of assembly, F-type ATPases have 2 components, CF(1) - the catalytic core - and CF(0) - the membrane proton channel. CF(1) has five subunits: alpha(3), beta(3), gamma(1), delta(1), epsilon(1). CF(0) has three main subunits: a, b and c.

Its subcellular location is the plastid. It localises to the chloroplast thylakoid membrane. Produces ATP from ADP in the presence of a proton gradient across the membrane. The protein is ATP synthase epsilon chain, chloroplastic of Oltmannsiellopsis viridis (Marine flagellate).